A 447-amino-acid polypeptide reads, in one-letter code: Phosphoglucosamine mutase (447 aa).

Catalysis depends on serine 100, which acts as the Phosphoserine intermediate. Serine 100, aspartate 239, aspartate 241, and aspartate 243 together coordinate Mg(2+). Serine 100 is modified (phosphoserine).

This sequence belongs to the phosphohexose mutase family. Requires Mg(2+) as cofactor. Activated by phosphorylation.

It catalyses the reaction alpha-D-glucosamine 1-phosphate = D-glucosamine 6-phosphate. Catalyzes the conversion of glucosamine-6-phosphate to glucosamine-1-phosphate. This is Phosphoglucosamine mutase from Caldanaerobacter subterraneus subsp. tengcongensis (strain DSM 15242 / JCM 11007 / NBRC 100824 / MB4) (Thermoanaerobacter tengcongensis).